Consider the following 226-residue polypeptide: Uridylate kinase (226 aa).

Position 6-10 (6-10 (KISGK)) interacts with ATP. G43 serves as a coordination point for UMP. Residues G44 and R48 each contribute to the ATP site. UMP-binding positions include D65 and 113-119 (FQPGQST). ATP-binding residues include T139, N140, Y145, and D148.

Belongs to the UMP kinase family. Homohexamer.

The protein localises to the cytoplasm. It carries out the reaction UMP + ATP = UDP + ADP. Its pathway is pyrimidine metabolism; CTP biosynthesis via de novo pathway; UDP from UMP (UMPK route): step 1/1. With respect to regulation, inhibited by UTP. Its function is as follows. Catalyzes the reversible phosphorylation of UMP to UDP. This chain is Uridylate kinase, found in Saccharolobus islandicus (strain Y.N.15.51 / Yellowstone #2) (Sulfolobus islandicus).